Consider the following 260-residue polypeptide: Zinc import ATP-binding protein ZnuC (260 aa).

The region spanning 18–234 (IRLQEVAVTF…PEYQKLFGSH (217 aa)) is the ABC transporter domain. Residue 50 to 57 (GNNGAGKT) participates in ATP binding. Positions 241 to 260 (VFPHDHHDHSGPALAGGGRG) are disordered.

Belongs to the ABC transporter superfamily. Zinc importer (TC 3.A.1.15.5) family. The complex is composed of two ATP-binding proteins (ZnuC), two transmembrane proteins (ZnuB) and a solute-binding protein (ZnuA).

It localises to the cell inner membrane. The enzyme catalyses Zn(2+)(out) + ATP(in) + H2O(in) = Zn(2+)(in) + ADP(in) + phosphate(in) + H(+)(in). In terms of biological role, part of the ABC transporter complex ZnuABC involved in zinc import. Responsible for energy coupling to the transport system. This chain is Zinc import ATP-binding protein ZnuC, found in Halorhodospira halophila (strain DSM 244 / SL1) (Ectothiorhodospira halophila (strain DSM 244 / SL1)).